A 329-amino-acid polypeptide reads, in one-letter code: RNA polymerase sigma factor SigB (329 aa).

Residues 1–12 (MTSPSDVEASTE) show a composition bias toward polar residues. Residues 1-27 (MTSPSDVEASTETVDRGSRRNQTNDNP) are disordered. The short motif at 120 to 133 (DLIQEGNLGLIRAM) is the Polymerase core binding element. Residues 290-309 (LDQIGRQFGLSRERVRQIER) constitute a DNA-binding region (H-T-H motif).

It belongs to the sigma-70 factor family.

In terms of biological role, sigma factors are initiation factors that promote the attachment of RNA polymerase to specific initiation sites and are then released. In Corynebacterium diphtheriae (strain ATCC 700971 / NCTC 13129 / Biotype gravis), this protein is RNA polymerase sigma factor SigB (sigB).